A 530-amino-acid polypeptide reads, in one-letter code: MSIDTYTETLKINKLIEKATSHFQLSSTQLYKKILKNHEGELTELGAINVKTGKYTGRSPKDKFIVTEPSYKDNINWGDINQPMDEETFLKLYNKVLDYLNQKEELYIFSGYAGSDKESRLKLKVINELAWHNLFARNMFIRPESIDEAQNIKPNFTIVSAPHFKANPKLDGTHSETFVIISFKHKVILIGGTEYAGEMKKGIFSVMNYLLPIQDIMSMHCSANVGEKGDVALFFGLSGTGKTTLSADPKRKLIGDDEHGWNKNGVFNIEGGCYAKAIHLSKQKEPQIYNAIKYGTILENTVTNDDGTVDFDDNTYTENTRAAYPIDYIENIVTPSKAAHPNTIIFLTADAFGVIPPISKLTKDQAMYHFLSGFTSKLAGTERGVTEPQPSFSTCFGAPFLPLSPTKYADLLGNLIDIHDVDVYLVNTGWTGGKYGVGRRISLHYTREMVDQAISGKLKNTKYIKDDTFGLNIPVQIDSVPTTILNPINAWNNKDNYKAQAYDLIQRFNNNFKKFGKEVEHIANKGAFNQ.

3 residues coordinate substrate: arginine 58, tyrosine 195, and lysine 201. ATP is bound by residues lysine 201, histidine 220, and 236-244 (GLSGTGKTT). Residues lysine 201 and histidine 220 each contribute to the Mn(2+) site. Aspartate 257 provides a ligand contact to Mn(2+). Residues glutamate 285, arginine 321, 440–441 (RI), and threonine 446 each bind ATP. Arginine 321 lines the substrate pocket.

Belongs to the phosphoenolpyruvate carboxykinase (ATP) family. Mn(2+) is required as a cofactor.

It localises to the cytoplasm. The enzyme catalyses oxaloacetate + ATP = phosphoenolpyruvate + ADP + CO2. The protein operates within carbohydrate biosynthesis; gluconeogenesis. Its function is as follows. Involved in the gluconeogenesis. Catalyzes the conversion of oxaloacetate (OAA) to phosphoenolpyruvate (PEP) through direct phosphoryl transfer between the nucleoside triphosphate and OAA. The sequence is that of Phosphoenolpyruvate carboxykinase (ATP) from Staphylococcus epidermidis (strain ATCC 35984 / DSM 28319 / BCRC 17069 / CCUG 31568 / BM 3577 / RP62A).